A 99-amino-acid chain; its full sequence is Large ribosomal subunit protein uL23 (99 aa).

This sequence belongs to the universal ribosomal protein uL23 family. As to quaternary structure, part of the 50S ribosomal subunit. Contacts protein L29, and trigger factor when it is bound to the ribosome.

Functionally, one of the early assembly proteins it binds 23S rRNA. One of the proteins that surrounds the polypeptide exit tunnel on the outside of the ribosome. Forms the main docking site for trigger factor binding to the ribosome. The polypeptide is Large ribosomal subunit protein uL23 (Shewanella loihica (strain ATCC BAA-1088 / PV-4)).